Reading from the N-terminus, the 180-residue chain is Large ribosomal subunit protein uL6 (180 aa).

It belongs to the universal ribosomal protein uL6 family. In terms of assembly, part of the 50S ribosomal subunit.

Functionally, this protein binds to the 23S rRNA, and is important in its secondary structure. It is located near the subunit interface in the base of the L7/L12 stalk, and near the tRNA binding site of the peptidyltransferase center. The sequence is that of Large ribosomal subunit protein uL6 from Lachnoclostridium phytofermentans (strain ATCC 700394 / DSM 18823 / ISDg) (Clostridium phytofermentans).